The following is a 216-amino-acid chain: ATP-dependent Clp protease proteolytic subunit (216 aa).

Residue Ser-103 is the Nucleophile of the active site. Residue His-128 is part of the active site. Residues 197–216 (RRPALPGDDAPRDVSEGPTP) form a disordered region.

The protein belongs to the peptidase S14 family. Fourteen ClpP subunits assemble into 2 heptameric rings which stack back to back to give a disk-like structure with a central cavity, resembling the structure of eukaryotic proteasomes.

The protein resides in the cytoplasm. It carries out the reaction Hydrolysis of proteins to small peptides in the presence of ATP and magnesium. alpha-casein is the usual test substrate. In the absence of ATP, only oligopeptides shorter than five residues are hydrolyzed (such as succinyl-Leu-Tyr-|-NHMec, and Leu-Tyr-Leu-|-Tyr-Trp, in which cleavage of the -Tyr-|-Leu- and -Tyr-|-Trp bonds also occurs).. Cleaves peptides in various proteins in a process that requires ATP hydrolysis. Has a chymotrypsin-like activity. Plays a major role in the degradation of misfolded proteins. The protein is ATP-dependent Clp protease proteolytic subunit of Sphingopyxis alaskensis (strain DSM 13593 / LMG 18877 / RB2256) (Sphingomonas alaskensis).